Reading from the N-terminus, the 545-residue chain is Chaperonin GroEL (545 aa).

Residues 29–32 (TLGP), lysine 50, 86–90 (DGTTT), glycine 413, 479–481 (NAA), and aspartate 496 contribute to the ATP site. The interval 525–545 (KPEKEKAPAAAGAPDMGGMDF) is disordered. The span at 532 to 545 (PAAAGAPDMGGMDF) shows a compositional bias: low complexity.

This sequence belongs to the chaperonin (HSP60) family. As to quaternary structure, forms a cylinder of 14 subunits composed of two heptameric rings stacked back-to-back. Interacts with the co-chaperonin GroES.

It localises to the cytoplasm. The catalysed reaction is ATP + H2O + a folded polypeptide = ADP + phosphate + an unfolded polypeptide.. In terms of biological role, together with its co-chaperonin GroES, plays an essential role in assisting protein folding. The GroEL-GroES system forms a nano-cage that allows encapsulation of the non-native substrate proteins and provides a physical environment optimized to promote and accelerate protein folding. The sequence is that of Chaperonin GroEL from Deinococcus geothermalis (strain DSM 11300 / CIP 105573 / AG-3a).